Reading from the N-terminus, the 116-residue chain is NADH-ubiquinone oxidoreductase chain 3 (116 aa).

A run of 3 helical transmembrane segments spans residues 8–28 (VAAT…LPSL), 56–76 (FFLV…LLPL), and 87–107 (ISLL…IYEW).

This sequence belongs to the complex I subunit 3 family.

It localises to the mitochondrion membrane. It carries out the reaction a ubiquinone + NADH + 5 H(+)(in) = a ubiquinol + NAD(+) + 4 H(+)(out). Core subunit of the mitochondrial membrane respiratory chain NADH dehydrogenase (Complex I) that is believed to belong to the minimal assembly required for catalysis. Complex I functions in the transfer of electrons from NADH to the respiratory chain. The immediate electron acceptor for the enzyme is believed to be ubiquinone. The polypeptide is NADH-ubiquinone oxidoreductase chain 3 (MT-ND3) (Squalus acanthias (Spiny dogfish)).